Reading from the N-terminus, the 187-residue chain is Large ribosomal subunit protein uL5 (187 aa).

It belongs to the universal ribosomal protein uL5 family. Part of the 50S ribosomal subunit; part of the 5S rRNA/L5/L18/L25 subcomplex. Contacts the 5S rRNA and the P site tRNA. Forms a bridge to the 30S subunit in the 70S ribosome.

In terms of biological role, this is one of the proteins that bind and probably mediate the attachment of the 5S RNA into the large ribosomal subunit, where it forms part of the central protuberance. In the 70S ribosome it contacts protein S13 of the 30S subunit (bridge B1b), connecting the 2 subunits; this bridge is implicated in subunit movement. Contacts the P site tRNA; the 5S rRNA and some of its associated proteins might help stabilize positioning of ribosome-bound tRNAs. The sequence is that of Large ribosomal subunit protein uL5 from Mycobacterium bovis (strain BCG / Tokyo 172 / ATCC 35737 / TMC 1019).